The following is a 253-amino-acid chain: LexA repressor (253 aa).

A DNA-binding region (H-T-H motif) is located at residues 26–46 (FDEMKDALNLRSKSGIHRLIS). Positions 73-97 (MPAATGKPPLAESGPPPVTAPATDE) are disordered. Catalysis depends on for autocatalytic cleavage activity residues S174 and K212.

The protein belongs to the peptidase S24 family. As to quaternary structure, homodimer.

It catalyses the reaction Hydrolysis of Ala-|-Gly bond in repressor LexA.. Functionally, represses a number of genes involved in the response to DNA damage (SOS response), including recA and lexA. In the presence of single-stranded DNA, RecA interacts with LexA causing an autocatalytic cleavage which disrupts the DNA-binding part of LexA, leading to derepression of the SOS regulon and eventually DNA repair. The sequence is that of LexA repressor from Gluconacetobacter diazotrophicus (strain ATCC 49037 / DSM 5601 / CCUG 37298 / CIP 103539 / LMG 7603 / PAl5).